A 49-amino-acid polypeptide reads, in one-letter code: U-theraphotoxin-Lk2a (49 aa).

4 cysteine pairs are disulfide-bonded: C4–C17, C8–C41, C22–C24, and C35–C46.

Belongs to the neurotoxin 12 (Hwtx-2) family. 04 (lasiotoxin) subfamily. Expressed by the venom gland.

It localises to the secreted. Toxin that causes irreversible contractile paralysis into adult Aedes aegypti resulting in 100% mortality after 24 hours. The protein is U-theraphotoxin-Lk2a of Lasiodora klugi (Bahia scarlet tarantula).